The sequence spans 474 residues: 3-isopropylmalate dehydratase large subunit (474 aa).

[4Fe-4S] cluster-binding residues include C353, C414, and C417.

This sequence belongs to the aconitase/IPM isomerase family. LeuC type 1 subfamily. As to quaternary structure, heterodimer of LeuC and LeuD. Requires [4Fe-4S] cluster as cofactor.

It carries out the reaction (2R,3S)-3-isopropylmalate = (2S)-2-isopropylmalate. It participates in amino-acid biosynthesis; L-leucine biosynthesis; L-leucine from 3-methyl-2-oxobutanoate: step 2/4. Catalyzes the isomerization between 2-isopropylmalate and 3-isopropylmalate, via the formation of 2-isopropylmaleate. The sequence is that of 3-isopropylmalate dehydratase large subunit from Pseudomonas aeruginosa (strain LESB58).